The chain runs to 515 residues: Acetyltransferase sphE (515 aa).

Catalysis depends on proton acceptor residues histidine 184 and aspartate 438.

The protein belongs to the plant acyltransferase family. In terms of assembly, monomer.

The enzyme catalyses sphingofungin B + acetyl-CoA = sphingofungin C + CoA. It functions in the pathway secondary metabolite biosynthesis. Acetyltransferase; part of the gene cluster that mediates the biosynthesis of sphingofungins, bioactive molecules acting as sphingolipid inhibitors via inhibiting serine palmitoyl transferase (SPT). Within the pathway, sphE catalyzes the O-acetylation of the C-5 hydroxyl group of sphingofungin B to produce sphingofungin C. SphE can also convert sphingofungin B1 into sphingofungin C1 and sphingofungin B2 into sphingofungin C2. Sphingofungin biosynthesis starts with the PKS sphB that produces an C18 polyketide precursor 3-hydroxyoctadeca-4,10-dienoyl-ACP containing one delta-6 desaturation and one delta-12 desaturation. The aminoacyl transferase sphA uses the sphB product to produce 3-keto-presphingofungin by adding an aminomalonate molecule. SphF then reduces the C-3 ketone of 3-keto-presphingofungin which leads to presphingofungin. The cytochrome P450 monooxygenase sphH converts presphingofungin into sphingofungin B1 which is further converted to sphingofungin B by the dioxygenase sphC. SphC is also able to convert presphingofungin into sphingofungin B2. The acetyltransferase sphE acetylates sphingofungin B to produce sphingofungin C, but can also convert sphingofungin B1 into sphingofungin C1 and sphingofungin B2 into sphingofungin C2. Finally, sphingofungin C can be spontaneously converted into sphingofungin D. This chain is Acetyltransferase sphE, found in Aspergillus fumigatus (strain CBS 144.89 / FGSC A1163 / CEA10) (Neosartorya fumigata).